A 354-amino-acid chain; its full sequence is G-protein coupled estrogen receptor 1 (354 aa).

Topologically, residues 1 to 40 (MEEQTTSLVWIYVNSTEQLNTSYEYNTTYLIEDSDKYQSY) are extracellular. The chain crosses the membrane as a helical span at residues 41 to 61 (VIGLFLSCLYTILLFPIGFIG). Topologically, residues 62–81 (NILILVVNLNHRGKMAIPDL) are cytoplasmic. The helical transmembrane segment at 82 to 102 (YFVNLAVADLILVADSLIEVF) threads the bilayer. The Extracellular portion of the chain corresponds to 103 to 112 (NLNEKYYDYA). The helical transmembrane segment at 113-133 (VLCTFMSLFLQVNMYSSIFFL) threads the bilayer. A disulfide bond links cysteine 115 and cysteine 192. The Cytoplasmic portion of the chain corresponds to 134-160 (TWMSFDRYIALANSMSSSPLRTMQHAK). The helical transmembrane segment at 161 to 181 (LSCGLIWMASILATLLPFTIV) threads the bilayer. At 182-202 (QTQHRGEVHFCFANVFEIQWL) the chain is on the extracellular side. Residues 203–223 (EVTIGFLVPFSIIGLCYSLIG) traverse the membrane as a helical segment. The Cytoplasmic segment spans residues 224-245 (RILMRSQKHRGLWPRRQKALRM). Residues 246-266 (IVVVVLVFFICWLPENVFISI) traverse the membrane as a helical segment. Residues 267–292 (QLLQGTADPSQRTATTLRHDYPLTGH) are Extracellular-facing. Residues 293–313 (IVNLAAFSNSCLNPIIYSFLG) form a helical membrane-spanning segment. Residues 314-353 (ETFRDKLRLFIKQKASWSVVNRFCHHGLDLHLPVRSEVSE) lie on the Cytoplasmic side of the membrane.

Belongs to the G-protein coupled receptor 1 family. Homodimer. Heterodimer. As to expression, expressed in oocytes (at protein level). Highly expressed in brain, heart, testis and ovary. Weakly expressed in muscle and intestine.

It localises to the nucleus. The protein resides in the cytoplasm. The protein localises to the perinuclear region. Its subcellular location is the cytoskeleton. It is found in the cytoplasmic vesicle membrane. It localises to the cell membrane. The protein resides in the basolateral cell membrane. The protein localises to the endoplasmic reticulum membrane. Its subcellular location is the early endosome. It is found in the recycling endosome. It localises to the golgi apparatus. The protein resides in the trans-Golgi network. The protein localises to the golgi apparatus membrane. Its subcellular location is the cell projection. It is found in the dendrite. It localises to the dendritic spine membrane. The protein resides in the axon. The protein localises to the postsynaptic density. Its subcellular location is the mitochondrion membrane. In terms of biological role, membrane G-protein coupled estrogen receptor that binds to 17-beta-estradiol (E2) with high affinity, leading to rapid and transient activation of numerous intracellular signaling pathways. Plays a role in the embryonic development of sensory and motor neurons. May induce apoptosis and reduce proliferation of brain cells. Involved in maintenance of meiotic arrest in oocytes. The polypeptide is G-protein coupled estrogen receptor 1 (gper1) (Micropogonias undulatus (Atlantic croaker)).